Here is a 310-residue protein sequence, read N- to C-terminus: NADH-cytochrome b5 reductase 1 (310 aa).

Residues 32 to 52 (EWLPYAVALAAILSGGKVFSN) form a helical membrane-spanning segment. The FAD-binding FR-type domain occupies 61-166 (TEFQNFELKE…RGPKGAMVYT (106 aa)). Residues 146 to 161 (AGLRIGQTMKVRGPKG) and 172 to 209 (KIGMIAGGTGITPMLQIIKAIIRGRPRNGGNDTTQVDL) each bind FAD.

This sequence belongs to the flavoprotein pyridine nucleotide cytochrome reductase family. In terms of assembly, monomer. Component of the 2-(3-amino-3-carboxypropyl)histidine synthase complex composed of DPH1, DPH2, DPH3 and a NADH-dependent reductase, predominantly CBR1. FAD serves as cofactor.

It localises to the mitochondrion outer membrane. It carries out the reaction 2 Fe(III)-[cytochrome b5] + NADH = 2 Fe(II)-[cytochrome b5] + NAD(+) + H(+). The catalysed reaction is 2 Fe(3+)-[Dph3] + NADH = 2 Fe(2+)-[Dph3] + NAD(+) + H(+). Its pathway is protein modification; peptidyl-diphthamide biosynthesis. Its function is as follows. NADH-dependent reductase for DPH3 and cytochrome b5. Required for the first step of diphthamide biosynthesis, a post-translational modification of histidine which occurs in elongation factor 2. DPH1 and DPH2 transfer a 3-amino-3-carboxypropyl (ACP) group from S-adenosyl-L-methionine (SAM) to a histidine residue, the reaction is assisted by a reduction system comprising DPH3 and a NADH-dependent reductase, predominantly CBR1. By reducing DPH3, also involved in the formation of the tRNA wobble base modification mcm5s 2U (5-methoxycarbonylmethyl-2-thiouridine), mediated by the elongator complex. The cytochrome b5/NADH cytochrome b5 reductase electron transfer system supports the catalytic activity of several sterol biosynthetic enzymes. This chain is NADH-cytochrome b5 reductase 1 (CBR1), found in Ajellomyces capsulatus (strain NAm1 / WU24) (Darling's disease fungus).